A 316-amino-acid polypeptide reads, in one-letter code: Probable porphobilinogen deaminase (316 aa).

Position 234 is an S-(dipyrrolylmethanemethyl)cysteine (Cys-234).

Belongs to the HMBS family. The cofactor is dipyrromethane.

It catalyses the reaction 4 porphobilinogen + H2O = hydroxymethylbilane + 4 NH4(+). It functions in the pathway porphyrin-containing compound metabolism; protoporphyrin-IX biosynthesis; coproporphyrinogen-III from 5-aminolevulinate: step 2/4. Its function is as follows. Tetrapolymerization of the monopyrrole PBG into the hydroxymethylbilane pre-uroporphyrinogen in several discrete steps. The protein is Probable porphobilinogen deaminase of Methanosarcina mazei (strain ATCC BAA-159 / DSM 3647 / Goe1 / Go1 / JCM 11833 / OCM 88) (Methanosarcina frisia).